A 423-amino-acid polypeptide reads, in one-letter code: Methionine aminopeptidase 2 (423 aa).

Residues 1–17 (MTDVIDAKPEEAKKVPP) are compositionally biased toward basic and acidic residues. The disordered stretch occupies residues 1–89 (MTDVIDAKPE…IQPYKDDNAY (89 aa)). Residues 18-29 (EVEDEDSGDESA) are compositionally biased toward acidic residues. Over residues 41–54 (KKKKKKKKPKKKKK) the composition is skewed to basic residues. His-176 provides a ligand contact to substrate. The a divalent metal cation site is built by Asp-196, Asp-207, and His-276. His-284 serves as a coordination point for substrate. Residues Glu-309 and Glu-404 each contribute to the a divalent metal cation site.

It belongs to the peptidase M24A family. Methionine aminopeptidase eukaryotic type 2 subfamily. The cofactor is Co(2+). It depends on Zn(2+) as a cofactor. Requires Mn(2+) as cofactor. Fe(2+) serves as cofactor.

It is found in the cytoplasm. The enzyme catalyses Release of N-terminal amino acids, preferentially methionine, from peptides and arylamides.. Cotranslationally removes the N-terminal methionine from nascent proteins. The N-terminal methionine is often cleaved when the second residue in the primary sequence is small and uncharged (Met-Ala-, Cys, Gly, Pro, Ser, Thr, or Val). The chain is Methionine aminopeptidase 2 from Schizophyllum commune (strain H4-8 / FGSC 9210) (Split gill fungus).